The primary structure comprises 734 residues: Photosystem I P700 chlorophyll a apoprotein A2 (734 aa).

Helical transmembrane passes span 46–69, 135–158, 175–199, 273–291, 330–353, 369–395, 417–439, and 517–535; these read IFAS…FHVA, LYIG…LHLQ, LNHH…HVAI, MAHH…GHMY, LHFQ…QHMY, AALY…IFFI, AIIS…LYVH, and FLVH…LILV. Residues Cys-559 and Cys-568 each coordinate [4Fe-4S] cluster. 2 helical membrane passes run 575–596 and 643–665; these read AFYL…YWHW and LSVW…MFLI. Chlorophyll a contacts are provided by His-654, Met-662, and Tyr-670. Position 671 (Trp-671) interacts with phylloquinone. The chain crosses the membrane as a helical span at residues 707-727; sequence LVGLAHFSVGYIFTYAAFLIA.

This sequence belongs to the PsaA/PsaB family. The PsaA/B heterodimer binds the P700 chlorophyll special pair and subsequent electron acceptors. PSI consists of a core antenna complex that captures photons, and an electron transfer chain that converts photonic excitation into a charge separation. The eukaryotic PSI reaction center is composed of at least 11 subunits. P700 is a chlorophyll a/chlorophyll a' dimer, A0 is one or more chlorophyll a, A1 is one or both phylloquinones and FX is a shared 4Fe-4S iron-sulfur center. serves as cofactor.

It is found in the plastid. It localises to the chloroplast thylakoid membrane. The catalysed reaction is reduced [plastocyanin] + hnu + oxidized [2Fe-2S]-[ferredoxin] = oxidized [plastocyanin] + reduced [2Fe-2S]-[ferredoxin]. PsaA and PsaB bind P700, the primary electron donor of photosystem I (PSI), as well as the electron acceptors A0, A1 and FX. PSI is a plastocyanin-ferredoxin oxidoreductase, converting photonic excitation into a charge separation, which transfers an electron from the donor P700 chlorophyll pair to the spectroscopically characterized acceptors A0, A1, FX, FA and FB in turn. Oxidized P700 is reduced on the lumenal side of the thylakoid membrane by plastocyanin. This chain is Photosystem I P700 chlorophyll a apoprotein A2, found in Populus alba (White poplar).